We begin with the raw amino-acid sequence, 215 residues long: Adenylate kinase (215 aa).

10–15 (GAGKGT) contacts ATP. Positions 30–59 (STGDMFRAAMKNNTELGKKAKSFMDNGDLV) are NMP. Residues Thr-31, Arg-36, 57-59 (DLV), 85-88 (GFPR), and Gln-92 each bind AMP. The tract at residues 126–163 (GRWICRTCGKTYHEIYNPPKVPGKCDLDGGELYQRDDD) is LID. ATP is bound at residue Arg-127. Residues Cys-130 and Cys-133 each coordinate Zn(2+). Residue 136 to 137 (TY) participates in ATP binding. Zn(2+) contacts are provided by Cys-150 and Asp-153. Residues Arg-160 and Arg-171 each contribute to the AMP site. Gln-199 contacts ATP.

Belongs to the adenylate kinase family. Monomer.

The protein resides in the cytoplasm. The enzyme catalyses AMP + ATP = 2 ADP. The protein operates within purine metabolism; AMP biosynthesis via salvage pathway; AMP from ADP: step 1/1. Catalyzes the reversible transfer of the terminal phosphate group between ATP and AMP. Plays an important role in cellular energy homeostasis and in adenine nucleotide metabolism. This Listeria monocytogenes serotype 4b (strain CLIP80459) protein is Adenylate kinase.